We begin with the raw amino-acid sequence, 158 residues long: Non-secretory ribonuclease (158 aa).

An N-terminal signal peptide occupies residues M1 to A27. W34 is a glycosylation site (C-linked (Man) tryptophan). The active-site Proton acceptor is the H42. Y60 carries the post-translational modification 3'-nitrotyrosine. Substrate is bound at residue K65–T69. N-linked (GlcNAc...) asparagine glycans are attached at residues N86, N92, and N111. The active-site Proton donor is the H153.

This sequence belongs to the pancreatic ribonuclease family. In terms of assembly, interacts with and forms a tight 1:1 complex with RNH1. Dimerization of two such complexes may occur.

The protein localises to the lysosome. Its subcellular location is the cytoplasmic granule. The catalysed reaction is an [RNA] containing cytidine + H2O = an [RNA]-3'-cytidine-3'-phosphate + a 5'-hydroxy-ribonucleotide-3'-[RNA].. It catalyses the reaction an [RNA] containing uridine + H2O = an [RNA]-3'-uridine-3'-phosphate + a 5'-hydroxy-ribonucleotide-3'-[RNA].. This is a non-secretory ribonuclease. It is a pyrimidine specific nuclease with a slight preference for U. Cytotoxin and helminthotoxin. Possesses a wide variety of biological activities. The chain is Non-secretory ribonuclease (RNASE2) from Saguinus labiatus (Red-chested mustached tamarin).